Reading from the N-terminus, the 151-residue chain is Large ribosomal subunit protein uL13 (151 aa).

This sequence belongs to the universal ribosomal protein uL13 family. In terms of assembly, part of the 50S ribosomal subunit.

Its function is as follows. This protein is one of the early assembly proteins of the 50S ribosomal subunit, although it is not seen to bind rRNA by itself. It is important during the early stages of 50S assembly. This chain is Large ribosomal subunit protein uL13, found in Synechococcus sp. (strain JA-3-3Ab) (Cyanobacteria bacterium Yellowstone A-Prime).